Here is a 511-residue protein sequence, read N- to C-terminus: Bifunctional purine biosynthesis protein PurH (511 aa).

Positions 1–145 (MKRRALVSVS…KNHQHVTVVV (145 aa)) constitute an MGS-like domain.

It belongs to the PurH family.

It carries out the reaction (6R)-10-formyltetrahydrofolate + 5-amino-1-(5-phospho-beta-D-ribosyl)imidazole-4-carboxamide = 5-formamido-1-(5-phospho-D-ribosyl)imidazole-4-carboxamide + (6S)-5,6,7,8-tetrahydrofolate. The catalysed reaction is IMP + H2O = 5-formamido-1-(5-phospho-D-ribosyl)imidazole-4-carboxamide. The protein operates within purine metabolism; IMP biosynthesis via de novo pathway; 5-formamido-1-(5-phospho-D-ribosyl)imidazole-4-carboxamide from 5-amino-1-(5-phospho-D-ribosyl)imidazole-4-carboxamide (10-formyl THF route): step 1/1. It functions in the pathway purine metabolism; IMP biosynthesis via de novo pathway; IMP from 5-formamido-1-(5-phospho-D-ribosyl)imidazole-4-carboxamide: step 1/1. This is Bifunctional purine biosynthesis protein PurH from Halalkalibacterium halodurans (strain ATCC BAA-125 / DSM 18197 / FERM 7344 / JCM 9153 / C-125) (Bacillus halodurans).